The primary structure comprises 216 residues: 3-keto-L-gulonate-6-phosphate decarboxylase UlaD (216 aa).

Residue Asp-11 coordinates substrate. Mg(2+) contacts are provided by Glu-33 and Asp-62. Arg-192 lines the substrate pocket.

It belongs to the HPS/KGPDC family. KGPDC subfamily. Homodimer. The cofactor is Mg(2+).

The catalysed reaction is 3-dehydro-L-gulonate 6-phosphate + H(+) = L-xylulose 5-phosphate + CO2. The protein operates within cofactor degradation; L-ascorbate degradation; D-xylulose 5-phosphate from L-ascorbate: step 2/4. Catalyzes the decarboxylation of 3-keto-L-gulonate-6-P into L-xylulose-5-P. Is involved in the anaerobic L-ascorbate utilization. The sequence is that of 3-keto-L-gulonate-6-phosphate decarboxylase UlaD from Escherichia coli O17:K52:H18 (strain UMN026 / ExPEC).